The following is a 625-amino-acid chain: DNA-directed RNA polymerase subunit gamma (625 aa).

The Zn(2+) site is built by cysteine 71, cysteine 73, cysteine 86, and cysteine 89. Mg(2+) contacts are provided by aspartate 467, aspartate 469, and aspartate 471.

It belongs to the RNA polymerase beta' chain family. RpoC1 subfamily. In cyanobacteria the RNAP catalytic core is composed of 2 alpha, 1 beta, 1 beta', 1 gamma and 1 omega subunit. When a sigma factor is associated with the core the holoenzyme is formed, which can initiate transcription. Mg(2+) is required as a cofactor. Zn(2+) serves as cofactor.

The enzyme catalyses RNA(n) + a ribonucleoside 5'-triphosphate = RNA(n+1) + diphosphate. In terms of biological role, DNA-dependent RNA polymerase catalyzes the transcription of DNA into RNA using the four ribonucleoside triphosphates as substrates. This Rippkaea orientalis (strain PCC 8801 / RF-1) (Cyanothece sp. (strain PCC 8801)) protein is DNA-directed RNA polymerase subunit gamma.